A 143-amino-acid chain; its full sequence is Large ribosomal subunit protein uL11 (143 aa).

Belongs to the universal ribosomal protein uL11 family. In terms of assembly, part of the ribosomal stalk of the 50S ribosomal subunit. Interacts with L10 and the large rRNA to form the base of the stalk. L10 forms an elongated spine to which L12 dimers bind in a sequential fashion forming a multimeric L10(L12)X complex. In terms of processing, one or more lysine residues are methylated.

In terms of biological role, forms part of the ribosomal stalk which helps the ribosome interact with GTP-bound translation factors. In Sphingopyxis alaskensis (strain DSM 13593 / LMG 18877 / RB2256) (Sphingomonas alaskensis), this protein is Large ribosomal subunit protein uL11.